The primary structure comprises 239 residues: Glucosamine-6-phosphate deaminase (239 aa).

The active-site Proton acceptor; for enolization step is aspartate 62. Asparagine 128 serves as the catalytic For ring-opening step. Catalysis depends on histidine 130, which acts as the Proton acceptor; for ring-opening step. The active-site For ring-opening step is glutamate 135.

It belongs to the glucosamine/galactosamine-6-phosphate isomerase family. NagB subfamily.

The enzyme catalyses alpha-D-glucosamine 6-phosphate + H2O = beta-D-fructose 6-phosphate + NH4(+). It participates in amino-sugar metabolism; N-acetylneuraminate degradation; D-fructose 6-phosphate from N-acetylneuraminate: step 5/5. Catalyzes the reversible isomerization-deamination of glucosamine 6-phosphate (GlcN6P) to form fructose 6-phosphate (Fru6P) and ammonium ion. The sequence is that of Glucosamine-6-phosphate deaminase from Lactobacillus johnsonii (strain CNCM I-12250 / La1 / NCC 533).